We begin with the raw amino-acid sequence, 1244 residues long: Superkiller complex protein 2 (1244 aa).

The segment at Leu-218–Val-249 is disordered. Residues Ser-242 and Ser-253 each carry the phosphoserine modification. Residues Ile-316–Ile-472 enclose the Helicase ATP-binding domain. Ala-329–Thr-336 serves as a coordination point for ATP. The DEVH box signature appears at Asp-420–His-423. In terms of domain architecture, Helicase C-terminal spans Gly-582 to Leu-752.

Belongs to the helicase family. SKI2 subfamily. In terms of assembly, component of the SKI complex which consists of SKIC2, SKIC3 and SKIC8. Interacts with HBS1L isoform 2.

The protein resides in the nucleus. Its subcellular location is the cytoplasm. It catalyses the reaction ATP + H2O = ADP + phosphate + H(+). Its function is as follows. Helicase component of the SKI complex, a multiprotein complex that assists the RNA-degrading exosome during the mRNA decay and quality-control pathways. The SKI complex catalyzes mRNA extraction from 80S ribosomal complexes in the 3'-5' direction and channels mRNA to the cytosolic exosome for degradation. SKI-mediated extraction of mRNA from stalled ribosomes allow binding of the Pelota-HBS1L complex and subsequent ribosome disassembly by ABCE1 for ribosome recycling. In the nucleus, the SKI complex associates with transcriptionally active genes in a manner dependent on PAF1 complex (PAF1C). In Mus musculus (Mouse), this protein is Superkiller complex protein 2.